An 874-amino-acid chain; its full sequence is Alanine--tRNA ligase (874 aa).

Histidine 562, histidine 566, cysteine 664, and histidine 668 together coordinate Zn(2+).

This sequence belongs to the class-II aminoacyl-tRNA synthetase family. It depends on Zn(2+) as a cofactor.

It is found in the cytoplasm. The enzyme catalyses tRNA(Ala) + L-alanine + ATP = L-alanyl-tRNA(Ala) + AMP + diphosphate. Functionally, catalyzes the attachment of alanine to tRNA(Ala) in a two-step reaction: alanine is first activated by ATP to form Ala-AMP and then transferred to the acceptor end of tRNA(Ala). Also edits incorrectly charged Ser-tRNA(Ala) and Gly-tRNA(Ala) via its editing domain. This is Alanine--tRNA ligase from Shewanella sp. (strain MR-7).